A 316-amino-acid polypeptide reads, in one-letter code: Ferrochelatase (316 aa).

2 residues coordinate Fe cation: His-190 and Glu-271.

The protein belongs to the ferrochelatase family.

The protein localises to the cytoplasm. The enzyme catalyses heme b + 2 H(+) = protoporphyrin IX + Fe(2+). It participates in porphyrin-containing compound metabolism; protoheme biosynthesis; protoheme from protoporphyrin-IX: step 1/1. Its function is as follows. Catalyzes the ferrous insertion into protoporphyrin IX. The protein is Ferrochelatase of Sulfurimonas denitrificans (strain ATCC 33889 / DSM 1251) (Thiomicrospira denitrificans (strain ATCC 33889 / DSM 1251)).